The sequence spans 541 residues: Alpha-zingiberene synthase (541 aa).

Mg(2+) contacts are provided by Asp-296, Asp-300, Asp-437, Thr-441, and Glu-445. A DDXXD motif motif is present at residues 296–300 (DDIYD).

Belongs to the terpene synthase family. Mg(2+) is required as a cofactor. The cofactor is Mn(2+).

The catalysed reaction is (2E,6E)-farnesyl diphosphate = alpha-zingiberene + diphosphate. The protein operates within secondary metabolite biosynthesis; terpenoid biosynthesis. Sesquiterpene synthase that catalyzes the formation of alpha-zingiberene and other sesquiterpenes from trans,trans-farnesyl diphosphate (FPP). May have an additional monoterpene synthase activity. The sequence is that of Alpha-zingiberene synthase (ZIS) from Ocimum basilicum (Sweet basil).